Consider the following 441-residue polypeptide: GPI mannosyltransferase 2 (441 aa).

10 consecutive transmembrane segments (helical) span residues 4-24 (MTVLSPSAGSQSACSLGLILV), 35-55 (ILFGLWKALIFLVIVICPGLG), 115-135 (LLALLASVLVLYRLSVNIFGG), 143-163 (LCFLSAALHIISPAGAFLSAP), 165-185 (GEALFSLLNISGLYLYSSSVL), 199-223 (LLAAAVLISAATAVRSNGILGGVLF), 249-269 (VIVLGGCVIALGMAVPQYIAF), 306-326 (YWVVPNIPLFLLAMPILALLL), 361-381 (LAIIQALLAVLAFTSYHVQII), and 418-438 (VAVQAIMIYGLIHAVLFGSFL).

It belongs to the PIGV family.

It is found in the endoplasmic reticulum membrane. The protein operates within glycolipid biosynthesis; glycosylphosphatidylinositol-anchor biosynthesis. Mannosyltransferase involved in glycosylphosphatidylinositol-anchor biosynthesis. Transfers the second mannose to the glycosylphosphatidylinositol during GPI precursor assembly. The polypeptide is GPI mannosyltransferase 2 (gpi18) (Aspergillus fumigatus (strain ATCC MYA-4609 / CBS 101355 / FGSC A1100 / Af293) (Neosartorya fumigata)).